The sequence spans 412 residues: Serine hydroxymethyltransferase 1 (412 aa).

Residues Leu-116 and 120–122 contribute to the (6S)-5,6,7,8-tetrahydrofolate site; that span reads GHL. Lys-225 is subject to N6-(pyridoxal phosphate)lysine.

Belongs to the SHMT family. Homodimer. Pyridoxal 5'-phosphate serves as cofactor.

It localises to the cytoplasm. The enzyme catalyses (6R)-5,10-methylene-5,6,7,8-tetrahydrofolate + glycine + H2O = (6S)-5,6,7,8-tetrahydrofolate + L-serine. It participates in one-carbon metabolism; tetrahydrofolate interconversion. The protein operates within amino-acid biosynthesis; glycine biosynthesis; glycine from L-serine: step 1/1. Its function is as follows. Catalyzes the reversible interconversion of serine and glycine with tetrahydrofolate (THF) serving as the one-carbon carrier. This reaction serves as the major source of one-carbon groups required for the biosynthesis of purines, thymidylate, methionine, and other important biomolecules. Also exhibits THF-independent aldolase activity toward beta-hydroxyamino acids, producing glycine and aldehydes, via a retro-aldol mechanism. This Pseudomonas fluorescens (strain Pf0-1) protein is Serine hydroxymethyltransferase 1.